Consider the following 459-residue polypeptide: Probable 1,4-beta-D-glucan cellobiohydrolase C (459 aa).

The first 18 residues, M1–A18, serve as a signal peptide directing secretion. The CBM1 domain maps to Q19–T54. Intrachain disulfides connect C26/C43 and C37/C53. The thr-rich linker stretch occupies residues T54–T94. The interval V76–A97 is disordered. The tract at residues A95 to F459 is catalytic. D189 is a catalytic residue. C190 and C249 are joined by a disulfide. D235 (proton donor) is an active-site residue. An N-linked (GlcNAc...) asparagine glycan is attached at N303. A disulfide bridge connects residues C381 and C428. Residue D414 is the Nucleophile of the active site.

Belongs to the glycosyl hydrolase 6 (cellulase B) family.

The protein localises to the secreted. The catalysed reaction is Hydrolysis of (1-&gt;4)-beta-D-glucosidic linkages in cellulose and cellotetraose, releasing cellobiose from the non-reducing ends of the chains.. The biological conversion of cellulose to glucose generally requires three types of hydrolytic enzymes: (1) Endoglucanases which cut internal beta-1,4-glucosidic bonds; (2) Exocellobiohydrolases that cut the disaccharide cellobiose from the non-reducing end of the cellulose polymer chain; (3) Beta-1,4-glucosidases which hydrolyze the cellobiose and other short cello-oligosaccharides to glucose. The chain is Probable 1,4-beta-D-glucan cellobiohydrolase C (cbhC) from Aspergillus niger (strain ATCC MYA-4892 / CBS 513.88 / FGSC A1513).